The sequence spans 135 residues: Ribosome-binding factor A (135 aa).

The protein belongs to the RbfA family. As to quaternary structure, monomer. Binds 30S ribosomal subunits, but not 50S ribosomal subunits or 70S ribosomes.

It is found in the cytoplasm. Functionally, one of several proteins that assist in the late maturation steps of the functional core of the 30S ribosomal subunit. Associates with free 30S ribosomal subunits (but not with 30S subunits that are part of 70S ribosomes or polysomes). Required for efficient processing of 16S rRNA. May interact with the 5'-terminal helix region of 16S rRNA. The polypeptide is Ribosome-binding factor A (Aliivibrio fischeri (strain ATCC 700601 / ES114) (Vibrio fischeri)).